We begin with the raw amino-acid sequence, 404 residues long: Probable tRNA sulfurtransferase (404 aa).

Residues 61 to 166 (EAVSERLKDV…SGYSYIMCDE (106 aa)) enclose the THUMP domain. Residues 184–185 (LL), 209–210 (HF), Arg-266, Gly-288, and Gln-297 each bind ATP.

The protein belongs to the ThiI family.

It is found in the cytoplasm. It carries out the reaction [ThiI sulfur-carrier protein]-S-sulfanyl-L-cysteine + a uridine in tRNA + 2 reduced [2Fe-2S]-[ferredoxin] + ATP + H(+) = [ThiI sulfur-carrier protein]-L-cysteine + a 4-thiouridine in tRNA + 2 oxidized [2Fe-2S]-[ferredoxin] + AMP + diphosphate. It catalyses the reaction [ThiS sulfur-carrier protein]-C-terminal Gly-Gly-AMP + S-sulfanyl-L-cysteinyl-[cysteine desulfurase] + AH2 = [ThiS sulfur-carrier protein]-C-terminal-Gly-aminoethanethioate + L-cysteinyl-[cysteine desulfurase] + A + AMP + 2 H(+). It functions in the pathway cofactor biosynthesis; thiamine diphosphate biosynthesis. In terms of biological role, catalyzes the ATP-dependent transfer of a sulfur to tRNA to produce 4-thiouridine in position 8 of tRNAs, which functions as a near-UV photosensor. Also catalyzes the transfer of sulfur to the sulfur carrier protein ThiS, forming ThiS-thiocarboxylate. This is a step in the synthesis of thiazole, in the thiamine biosynthesis pathway. The sulfur is donated as persulfide by IscS. In Bacillus cereus (strain ATCC 10987 / NRS 248), this protein is Probable tRNA sulfurtransferase.